The chain runs to 528 residues: Na(+)/H(+) antiporter NhaB (528 aa).

The next 11 helical transmembrane spans lie at 10-30 (IGNF…SFLI), 63-83 (YPLQ…MTSA), 96-116 (VLLL…LLLF), 131-165 (VSLM…FYAI), 204-224 (LLMH…VGEP), 240-260 (FVIR…LTCL), 305-325 (VLVG…VGLV), 359-379 (LAVF…APVI), 391-411 (LVIF…VFVG), 449-469 (ATPN…APLI), and 476-496 (MVWM…LAIE).

It belongs to the NhaB Na(+)/H(+) (TC 2.A.34) antiporter family.

The protein resides in the cell inner membrane. It carries out the reaction 2 Na(+)(in) + 3 H(+)(out) = 2 Na(+)(out) + 3 H(+)(in). Na(+)/H(+) antiporter that extrudes sodium in exchange for external protons. In Shewanella putrefaciens (strain CN-32 / ATCC BAA-453), this protein is Na(+)/H(+) antiporter NhaB.